The sequence spans 276 residues: NADPH-dependent 7-cyano-7-deazaguanine reductase (276 aa).

A substrate-binding site is contributed by 83–85 (IES). 85-86 (SK) contributes to the NADPH binding site. Cys-184 (thioimide intermediate) is an active-site residue. The active-site Proton donor is Asp-191. 223–224 (HE) lines the substrate pocket. 252–253 (RG) serves as a coordination point for NADPH.

It belongs to the GTP cyclohydrolase I family. QueF type 2 subfamily. Homodimer.

It localises to the cytoplasm. The enzyme catalyses 7-aminomethyl-7-carbaguanine + 2 NADP(+) = 7-cyano-7-deazaguanine + 2 NADPH + 3 H(+). The protein operates within tRNA modification; tRNA-queuosine biosynthesis. Functionally, catalyzes the NADPH-dependent reduction of 7-cyano-7-deazaguanine (preQ0) to 7-aminomethyl-7-deazaguanine (preQ1). The sequence is that of NADPH-dependent 7-cyano-7-deazaguanine reductase from Ectopseudomonas mendocina (strain ymp) (Pseudomonas mendocina).